Reading from the N-terminus, the 124-residue chain is Large ribosomal subunit protein uL18 (124 aa).

Belongs to the universal ribosomal protein uL18 family. In terms of assembly, part of the 50S ribosomal subunit; part of the 5S rRNA/L5/L18/L25 subcomplex. Contacts the 5S and 23S rRNAs.

This is one of the proteins that bind and probably mediate the attachment of the 5S RNA into the large ribosomal subunit, where it forms part of the central protuberance. In Orientia tsutsugamushi (strain Ikeda) (Rickettsia tsutsugamushi), this protein is Large ribosomal subunit protein uL18.